We begin with the raw amino-acid sequence, 232 residues long: tRNA (guanine-N(7)-)-methyltransferase (232 aa).

Residues Glu63, Glu88, Asp115, and Asp137 each contribute to the S-adenosyl-L-methionine site. Asp137 is an active-site residue. Substrate is bound by residues Lys141, Asp173, and 211–214 (TRYE).

The protein belongs to the class I-like SAM-binding methyltransferase superfamily. TrmB family.

It carries out the reaction guanosine(46) in tRNA + S-adenosyl-L-methionine = N(7)-methylguanosine(46) in tRNA + S-adenosyl-L-homocysteine. It participates in tRNA modification; N(7)-methylguanine-tRNA biosynthesis. Catalyzes the formation of N(7)-methylguanine at position 46 (m7G46) in tRNA. The chain is tRNA (guanine-N(7)-)-methyltransferase from Agrobacterium fabrum (strain C58 / ATCC 33970) (Agrobacterium tumefaciens (strain C58)).